The following is a 415-amino-acid chain: Multifunctional CCA protein (415 aa).

The ATP site is built by glycine 8 and arginine 11. Positions 8 and 11 each coordinate CTP. Residues glutamate 21 and aspartate 23 each contribute to the Mg(2+) site. The ATP site is built by arginine 91, arginine 137, and arginine 140. CTP is bound by residues arginine 91, arginine 137, and arginine 140. Residues 226-327 (TGIHTLMTVS…IKLFSAIDVW (102 aa)) enclose the HD domain.

The protein belongs to the tRNA nucleotidyltransferase/poly(A) polymerase family. Bacterial CCA-adding enzyme type 1 subfamily. In terms of assembly, monomer. Can also form homodimers and oligomers. Requires Mg(2+) as cofactor. The cofactor is Ni(2+).

The enzyme catalyses a tRNA precursor + 2 CTP + ATP = a tRNA with a 3' CCA end + 3 diphosphate. The catalysed reaction is a tRNA with a 3' CCA end + 2 CTP + ATP = a tRNA with a 3' CCACCA end + 3 diphosphate. Functionally, catalyzes the addition and repair of the essential 3'-terminal CCA sequence in tRNAs without using a nucleic acid template. Adds these three nucleotides in the order of C, C, and A to the tRNA nucleotide-73, using CTP and ATP as substrates and producing inorganic pyrophosphate. tRNA 3'-terminal CCA addition is required both for tRNA processing and repair. Also involved in tRNA surveillance by mediating tandem CCA addition to generate a CCACCA at the 3' terminus of unstable tRNAs. While stable tRNAs receive only 3'-terminal CCA, unstable tRNAs are marked with CCACCA and rapidly degraded. The polypeptide is Multifunctional CCA protein (Sodalis glossinidius (strain morsitans)).